The primary structure comprises 312 residues: MKVAVLGAAGGIGQALALLLKNQLPSGSELSLYDIAPVTPGVAVDLSHIPTAVKIKGFSGEDATPALEGADVVLISAGVARKPGMDRSDLFNVNAGIVKNLVQQIAKTCPKACVGIITNPVNTTVAIAAEVLKKAGVYDKNKLFGVTTLDIIRSNTFVAELKGKLPTEVEVPVIGGHSGVTILPLLSQIPGVSFTEQEAAELTKRIQNAGTEVVEAKAGGGSATLSMGQAAARFGLSLVRALQGEKGVVECAYVEGDGQYARFFSQPLLLGKNGVEERKSIGTLSAFEQHSLDAMLYTLKKDIQLGEDFINK.

NAD(+)-binding positions include 7-13 (GAAGGIG) and Asp-34. 2 residues coordinate substrate: Arg-81 and Arg-87. NAD(+)-binding positions include Asn-94 and 117-119 (ITN). Asn-119 and Arg-153 together coordinate substrate. His-177 acts as the Proton acceptor in catalysis. Residue Met-227 coordinates NAD(+).

It belongs to the LDH/MDH superfamily. MDH type 1 family. In terms of assembly, homodimer.

It catalyses the reaction (S)-malate + NAD(+) = oxaloacetate + NADH + H(+). Functionally, catalyzes the reversible oxidation of malate to oxaloacetate. The protein is Malate dehydrogenase of Salmonella gallinarum (strain 287/91 / NCTC 13346).